A 990-amino-acid polypeptide reads, in one-letter code: TonB-dependent receptor P26 (990 aa).

A TonB box motif is present at residues 86-93; the sequence is DEVVVIGY. The region spanning 97–213 is the TBDR plug domain; the sequence is RKSDLTGSVS…ANGVVLVTTK (117 aa). Residues 220–990 form the TBDR beta-barrel domain; it reads SSKPEVSANI…TITLGLNVTF (771 aa). Residues 878-902 form a disordered region; that stretch reads TPENPTSDIPRAGGDSVTGTPPNSA. A TonB C-terminal box motif is present at residues 974–990; it reads GSYPNPRTITLGLNVTF.

The protein belongs to the TonB-dependent receptor family.

It localises to the cell outer membrane. TonB-dependent receptor probably involved in ulvan degradation. Ulvan is the main polysaccharide component of the Ulvales (green seaweed) cell wall. It is composed of disaccharide building blocks comprising 3-sulfated rhamnose (Rha3S) linked to D-glucuronic acid (GlcA), L-iduronic acid (IduA), or D-xylose (Xyl). The TonB-dependent receptor may mediate transport of ulvan oligosaccharides from the surface of the outer membrane to the periplasm for subsequent degradation. The sequence is that of TonB-dependent receptor P26 from Formosa agariphila (strain DSM 15362 / KCTC 12365 / LMG 23005 / KMM 3901 / M-2Alg 35-1).